A 505-amino-acid chain; its full sequence is RNA-splicing ligase RtcB homolog (505 aa).

Mn(2+) is bound by residues aspartate 119, cysteine 122, histidine 227, and histidine 259. 226–230 serves as a coordination point for GMP; sequence NHYAE. Position 300 is a phosphoserine (serine 300). Histidine 353 serves as a coordination point for Mn(2+). GMP is bound by residues 353 to 354, 402 to 405, serine 409, and 428 to 431; these read HN, GGTM, and HGAG. Histidine 428 functions as the GMP-histidine intermediate in the catalytic mechanism. Lysine 496 participates in a covalent cross-link: Glycyl lysine isopeptide (Lys-Gly) (interchain with G-Cter in SUMO2). Lysine 504 contributes to the GMP binding site.

The protein belongs to the RtcB family. In terms of assembly, catalytic component of the tRNA-splicing ligase complex. Mn(2+) is required as a cofactor.

The protein resides in the nucleus. The protein localises to the cytoplasm. It catalyses the reaction a 3'-end 3'-phospho-ribonucleotide-RNA + a 5'-end dephospho-ribonucleoside-RNA + GTP = a ribonucleotidyl-ribonucleotide-RNA + GMP + diphosphate. It carries out the reaction a 3'-end 2',3'-cyclophospho-ribonucleotide-RNA + a 5'-end dephospho-ribonucleoside-RNA + GTP + H2O = a ribonucleotidyl-ribonucleotide-RNA + GMP + diphosphate + H(+). Functionally, catalytic subunit of the tRNA-splicing ligase complex that acts by directly joining spliced tRNA halves to mature-sized tRNAs by incorporating the precursor-derived splice junction phosphate into the mature tRNA as a canonical 3',5'-phosphodiester. May act as an RNA ligase with broad substrate specificity, and may function toward other RNAs. This Macaca fascicularis (Crab-eating macaque) protein is RNA-splicing ligase RtcB homolog.